The sequence spans 382 residues: Dual-specificity RNA methyltransferase RlmN (382 aa).

Glutamate 96 serves as the catalytic Proton acceptor. The 241-residue stretch at 102-342 (QGKRGTLCVS…VRTTRGEDID (241 aa)) folds into the Radical SAM core domain. Cysteines 109 and 345 form a disulfide. 3 residues coordinate [4Fe-4S] cluster: cysteine 116, cysteine 120, and cysteine 123. S-adenosyl-L-methionine is bound by residues 170–171 (GE), serine 202, 224–226 (SLH), and asparagine 302. The active-site S-methylcysteine intermediate is the cysteine 345.

Belongs to the radical SAM superfamily. RlmN family. [4Fe-4S] cluster serves as cofactor.

It localises to the cytoplasm. It carries out the reaction adenosine(2503) in 23S rRNA + 2 reduced [2Fe-2S]-[ferredoxin] + 2 S-adenosyl-L-methionine = 2-methyladenosine(2503) in 23S rRNA + 5'-deoxyadenosine + L-methionine + 2 oxidized [2Fe-2S]-[ferredoxin] + S-adenosyl-L-homocysteine. It catalyses the reaction adenosine(37) in tRNA + 2 reduced [2Fe-2S]-[ferredoxin] + 2 S-adenosyl-L-methionine = 2-methyladenosine(37) in tRNA + 5'-deoxyadenosine + L-methionine + 2 oxidized [2Fe-2S]-[ferredoxin] + S-adenosyl-L-homocysteine. Its function is as follows. Specifically methylates position 2 of adenine 2503 in 23S rRNA and position 2 of adenine 37 in tRNAs. m2A2503 modification seems to play a crucial role in the proofreading step occurring at the peptidyl transferase center and thus would serve to optimize ribosomal fidelity. This is Dual-specificity RNA methyltransferase RlmN from Pseudomonas savastanoi pv. phaseolicola (strain 1448A / Race 6) (Pseudomonas syringae pv. phaseolicola (strain 1448A / Race 6)).